Consider the following 300-residue polypeptide: Probable ABC transporter permease protein YurM (300 aa).

Helical transmembrane passes span 37 to 57 (VWVF…WMVM), 98 to 118 (VIVT…AAYG), 129 to 149 (FFLV…LVPL), 161 to 181 (TYWA…IILI), 204 to 224 (FGVF…TSGI), and 264 to 284 (WGVL…LFLL). Positions 94–285 (FMNSVIVTAL…APIIILFLLM (192 aa)) constitute an ABC transmembrane type-1 domain.

Belongs to the binding-protein-dependent transport system permease family. MalFG subfamily.

The protein resides in the cell membrane. Functionally, probably part of the binding-protein-dependent transport system YurMNO. Probably responsible for the translocation of the substrate across the membrane. The polypeptide is Probable ABC transporter permease protein YurM (yurM) (Bacillus subtilis (strain 168)).